A 588-amino-acid chain; its full sequence is Adenine deaminase (588 aa).

The protein belongs to the metallo-dependent hydrolases superfamily. Adenine deaminase family. As to quaternary structure, homodimer. Mn(2+) is required as a cofactor.

The enzyme catalyses adenine + H2O + H(+) = hypoxanthine + NH4(+). The chain is Adenine deaminase from Escherichia coli O157:H7 (strain EC4115 / EHEC).